We begin with the raw amino-acid sequence, 451 residues long: Probable D-serine dehydratase (451 aa).

The segment at 1 to 55 (MPGRTRPSCRLAITFTPRPDSATPRAGRAAPATGRRSNRSRSTLSATASPMPRRP) is disordered. Low complexity predominate over residues 22–35 (ATPRAGRAAPATGR). At Lys118 the chain carries N6-(pyridoxal phosphate)lysine.

It belongs to the serine/threonine dehydratase family. DsdA subfamily. Requires pyridoxal 5'-phosphate as cofactor.

It carries out the reaction D-serine = pyruvate + NH4(+). This Paracidovorax citrulli (strain AAC00-1) (Acidovorax citrulli) protein is Probable D-serine dehydratase.